The primary structure comprises 793 residues: Ferredoxin/F(420)H(2)-dependent CoB-CoM heterodisulfide reductase subunit A (793 aa).

Position 147 to 170 (147 to 170) interacts with FAD; sequence GGGVAGIEAALNLAEAGFPVTMVE. 4 4Fe-4S ferredoxin-type domains span residues 233–264, 282–311, 571–600, and 601–629; these read RKPR…PMNY, QVVL…YEQK, MGAH…IENK, and KAVV…MRNF. [4Fe-4S] cluster-binding residues include Cys-243, Cys-246, Cys-250, Cys-254, Cys-291, Cys-294, Cys-297, Cys-301, Cys-580, Cys-583, Cys-586, Cys-590, Cys-609, Cys-612, Cys-615, and Cys-619.

It belongs to the HdrA family. As to quaternary structure, the ferredoxin/F(420)H(2)-dependent CoB-CoM heterodisulfide reductase is composed of three subunits; HdrA2, HdrB2 and HdrC2. Requires [4Fe-4S] cluster as cofactor. The cofactor is [2Fe-2S] cluster. It depends on FAD as a cofactor.

It is found in the cytoplasm. It catalyses the reaction coenzyme B + coenzyme M + 2 oxidized [2Fe-2S]-[ferredoxin] = coenzyme M-coenzyme B heterodisulfide + 2 reduced [2Fe-2S]-[ferredoxin] + 2 H(+). The catalysed reaction is coenzyme B + 2 oxidized coenzyme F420-(gamma-L-Glu)(n) + coenzyme M + 2 reduced [2Fe-2S]-[ferredoxin] + 4 H(+) = coenzyme M-coenzyme B heterodisulfide + 2 reduced coenzyme F420-(gamma-L-Glu)(n) + 2 oxidized [2Fe-2S]-[ferredoxin]. It functions in the pathway cofactor metabolism; coenzyme M-coenzyme B heterodisulfide reduction; coenzyme B and coenzyme M from coenzyme M-coenzyme B heterodisulfide: step 1/1. Part of a complex that catalyzes the reversible reduction of CoM-S-S-CoB to the thiol-coenzymes H-S-CoM (coenzyme M) and H-S-CoB (coenzyme B). Catalyzes the transfer of electrons from ferredoxin to CoM-S-S-CoB during methanogenesis from acetate. Electrons transfer from ferredoxin to CoM-S-S-CoB via HdrA2, HdrC2 and HdrB2. In addition, the complex can use electron bifurcation to direct electron pairs from reduced coenzyme F420 towards the reduction of both ferredoxin and CoB-CoM heterodisulfide. This activity may take place during Fe(III)-dependent anaerobic methane oxidation. The polypeptide is Ferredoxin/F(420)H(2)-dependent CoB-CoM heterodisulfide reductase subunit A (Methanosarcina acetivorans (strain ATCC 35395 / DSM 2834 / JCM 12185 / C2A)).